The sequence spans 123 residues: Small ribosomal subunit protein uS12 (123 aa).

The segment at 1–25 (MPTINQLVRKPRKSRSALNKAPALQ) is disordered. D90 carries the 3-methylthioaspartic acid modification.

Belongs to the universal ribosomal protein uS12 family. As to quaternary structure, part of the 30S ribosomal subunit. Contacts proteins S8 and S17. May interact with IF1 in the 30S initiation complex.

Its function is as follows. With S4 and S5 plays an important role in translational accuracy. Interacts with and stabilizes bases of the 16S rRNA that are involved in tRNA selection in the A site and with the mRNA backbone. Located at the interface of the 30S and 50S subunits, it traverses the body of the 30S subunit contacting proteins on the other side and probably holding the rRNA structure together. The combined cluster of proteins S8, S12 and S17 appears to hold together the shoulder and platform of the 30S subunit. The chain is Small ribosomal subunit protein uS12 from Ehrlichia canis (strain Jake).